A 178-amino-acid chain; its full sequence is MASSMISSPAVTTVNRAGAGTVAPFTGLKSMAGFPTRKTNNDIASIASNGGRVQCMQVWPTTGKKKFETLSYLPDLDDAQLAKEVEYLLRKGWIPCLEFELEHGFVYRENHRSPGYYDGRYWTMWKLPVFGCTDASQVLKELQEAKTAYPNGFIRIIGFDNVRQVQCISFIAYKPPSF.

The transit peptide at M1–Q54 directs the protein to the chloroplast.

The protein belongs to the RuBisCO small chain family. In terms of assembly, heterohexadecamer of 8 large and 8 small subunits.

The protein localises to the plastid. It is found in the chloroplast. RuBisCO catalyzes two reactions: the carboxylation of D-ribulose 1,5-bisphosphate, the primary event in carbon dioxide fixation, as well as the oxidative fragmentation of the pentose substrate. Both reactions occur simultaneously and in competition at the same active site. Although the small subunit is not catalytic it is essential for maximal activity. The chain is Ribulose bisphosphate carboxylase small subunit, chloroplastic from Glycine tomentella (Woolly glycine).